Reading from the N-terminus, the 181-residue chain is Acireductone dioxygenase (181 aa).

A compositionally biased stretch (acidic residues) spans 1-10 (MRAYIYDEES). A disordered region spans residues 1–23 (MRAYIYDEESQLSPQDEHESSQS). Fe(2+)-binding residues include His82, His84, Glu88, and His128. Residues His82, His84, Glu88, and His128 each contribute to the Ni(2+) site.

It belongs to the acireductone dioxygenase (ARD) family. It depends on Fe(2+) as a cofactor. Ni(2+) is required as a cofactor.

It localises to the cytoplasm. The protein resides in the nucleus. It catalyses the reaction 1,2-dihydroxy-5-(methylsulfanyl)pent-1-en-3-one + O2 = 4-methylsulfanyl-2-oxobutanoate + formate + 2 H(+). It carries out the reaction 1,2-dihydroxy-5-(methylsulfanyl)pent-1-en-3-one + O2 = 3-(methylsulfanyl)propanoate + CO + formate + 2 H(+). Its pathway is amino-acid biosynthesis; L-methionine biosynthesis via salvage pathway; L-methionine from S-methyl-5-thio-alpha-D-ribose 1-phosphate: step 5/6. Functionally, catalyzes 2 different reactions between oxygen and the acireductone 1,2-dihydroxy-3-keto-5-methylthiopentene (DHK-MTPene) depending upon the metal bound in the active site. Fe-containing acireductone dioxygenase (Fe-ARD) produces formate and 2-keto-4-methylthiobutyrate (KMTB), the alpha-ketoacid precursor of methionine in the methionine recycle pathway. Ni-containing acireductone dioxygenase (Ni-ARD) produces methylthiopropionate, carbon monoxide and formate, and does not lie on the methionine recycle pathway. This chain is Acireductone dioxygenase, found in Puccinia graminis f. sp. tritici (strain CRL 75-36-700-3 / race SCCL) (Black stem rust fungus).